The following is a 372-amino-acid chain: MHNQAPIQRRKSTRIYVGNVPIGDGAPIAVQSMTNTRTTDVEATVNQIKALERVGADIVRVSVPTMDAAEAFKLIKQQVNVPLVADIHFDYRIALKVAEYGVDCLRINPGNIGNEERIRMVVDCARDKNIPIRIGVNAGSLEKDLQEKYGEPTPQALLESAMRHVDHLDRLNFDQFKVSVKASDVFLAVESYRLLAKQIDQPLHLGITEAGGARSGAVKSAIGLGLLLSEGIGDTLRVSLAADPVEEIKVGFDILKSLRIRSRGINFIACPTCSRQEFDVIGTVNALEQRLEDIITSMDVSIIGCVVNGPGEALVSTLGVTGGNKKSGLYEDGVRKDRLDNNDMIDQLEARIRAKASQLDEARRIDVQQVEK.

Residues Cys270, Cys273, Cys305, and Glu312 each contribute to the [4Fe-4S] cluster site.

Belongs to the IspG family. [4Fe-4S] cluster serves as cofactor.

The enzyme catalyses (2E)-4-hydroxy-3-methylbut-2-enyl diphosphate + oxidized [flavodoxin] + H2O + 2 H(+) = 2-C-methyl-D-erythritol 2,4-cyclic diphosphate + reduced [flavodoxin]. It functions in the pathway isoprenoid biosynthesis; isopentenyl diphosphate biosynthesis via DXP pathway; isopentenyl diphosphate from 1-deoxy-D-xylulose 5-phosphate: step 5/6. Functionally, converts 2C-methyl-D-erythritol 2,4-cyclodiphosphate (ME-2,4cPP) into 1-hydroxy-2-methyl-2-(E)-butenyl 4-diphosphate. This Escherichia coli O8 (strain IAI1) protein is 4-hydroxy-3-methylbut-2-en-1-yl diphosphate synthase (flavodoxin).